The sequence spans 452 residues: Pup--protein ligase (452 aa).

Glu-9 provides a ligand contact to Mg(2+). Arg-53 provides a ligand contact to ATP. Residue Tyr-55 participates in Mg(2+) binding. The active-site Proton acceptor is the Asp-57. Glu-63 provides a ligand contact to Mg(2+). ATP contacts are provided by Thr-66 and Trp-419.

The protein belongs to the Pup ligase/Pup deamidase family. Pup-conjugating enzyme subfamily.

The enzyme catalyses ATP + [prokaryotic ubiquitin-like protein]-L-glutamate + [protein]-L-lysine = ADP + phosphate + N(6)-([prokaryotic ubiquitin-like protein]-gamma-L-glutamyl)-[protein]-L-lysine.. Its pathway is protein degradation; proteasomal Pup-dependent pathway. It functions in the pathway protein modification; protein pupylation. Its function is as follows. Catalyzes the covalent attachment of the prokaryotic ubiquitin-like protein modifier Pup to the proteasomal substrate proteins, thereby targeting them for proteasomal degradation. This tagging system is termed pupylation. The ligation reaction involves the side-chain carboxylate of the C-terminal glutamate of Pup and the side-chain amino group of a substrate lysine. The protein is Pup--protein ligase of Saccharomonospora viridis (strain ATCC 15386 / DSM 43017 / JCM 3036 / CCUG 5913 / NBRC 12207 / NCIMB 9602 / P101) (Thermoactinomyces viridis).